Reading from the N-terminus, the 525-residue chain is Phosphoenolpyruvate carboxykinase (ATP) 1 (525 aa).

Residues Arg-55, Tyr-190, and Lys-196 each contribute to the substrate site. Residues Lys-196, His-215, and 231 to 239 (GLSGTGKTT) contribute to the ATP site. Mn(2+) contacts are provided by Lys-196 and His-215. A Mn(2+)-binding site is contributed by Asp-252. Residues Glu-280, Arg-317, and Thr-442 each coordinate ATP. Arg-317 serves as a coordination point for substrate.

This sequence belongs to the phosphoenolpyruvate carboxykinase (ATP) family. Mn(2+) serves as cofactor.

It is found in the cytoplasm. The catalysed reaction is oxaloacetate + ATP = phosphoenolpyruvate + ADP + CO2. Its pathway is carbohydrate biosynthesis; gluconeogenesis. In terms of biological role, involved in the gluconeogenesis. Catalyzes the conversion of oxaloacetate (OAA) to phosphoenolpyruvate (PEP) through direct phosphoryl transfer between the nucleoside triphosphate and OAA. The protein is Phosphoenolpyruvate carboxykinase (ATP) 1 of Moorella thermoacetica (strain ATCC 39073 / JCM 9320).